The following is a 323-amino-acid chain: tRNA dimethylallyltransferase (323 aa).

ATP is bound at residue 32 to 39 (GPTASGKS). 34 to 39 (TASGKS) serves as a coordination point for substrate. Residues 57 to 60 (DSMQ) are interaction with substrate tRNA.

The protein belongs to the IPP transferase family. As to quaternary structure, monomer. The cofactor is Mg(2+).

The enzyme catalyses adenosine(37) in tRNA + dimethylallyl diphosphate = N(6)-dimethylallyladenosine(37) in tRNA + diphosphate. Catalyzes the transfer of a dimethylallyl group onto the adenine at position 37 in tRNAs that read codons beginning with uridine, leading to the formation of N6-(dimethylallyl)adenosine (i(6)A). In Rhodopseudomonas palustris (strain BisB5), this protein is tRNA dimethylallyltransferase.